The chain runs to 447 residues: Trigger factor (447 aa).

One can recognise a PPIase FKBP-type domain in the interval 174–261; the sequence is GDIAVLGFKG…LKDLKTRELP (88 aa).

Belongs to the FKBP-type PPIase family. Tig subfamily.

The protein localises to the cytoplasm. The catalysed reaction is [protein]-peptidylproline (omega=180) = [protein]-peptidylproline (omega=0). Functionally, involved in protein export. Acts as a chaperone by maintaining the newly synthesized protein in an open conformation. Functions as a peptidyl-prolyl cis-trans isomerase. The polypeptide is Trigger factor (Synechococcus sp. (strain CC9902)).